Reading from the N-terminus, the 226-residue chain is ATP synthase F(0) complex subunit a (226 aa).

The next 6 helical transmembrane spans lie at 6–26, 68–88, 97–117, 138–158, 164–184, and 195–215; these read FAPF…IITF, WTLM…LGLL, QLSM…IMGF, IPML…ALAV, ITAG…LSSI, and ILFL…YVFT.

This sequence belongs to the ATPase A chain family. Component of the ATP synthase complex composed at least of ATP5F1A/subunit alpha, ATP5F1B/subunit beta, ATP5MC1/subunit c (homooctomer), MT-ATP6/subunit a, MT-ATP8/subunit 8, ATP5ME/subunit e, ATP5MF/subunit f, ATP5MG/subunit g, ATP5MK/subunit k, ATP5MJ/subunit j, ATP5F1C/subunit gamma, ATP5F1D/subunit delta, ATP5F1E/subunit epsilon, ATP5PF/subunit F6, ATP5PB/subunit b, ATP5PD/subunit d, ATP5PO/subunit OSCP. ATP synthase complex consists of a soluble F(1) head domain (subunits alpha(3) and beta(3)) - the catalytic core - and a membrane F(0) domain - the membrane proton channel (subunits c, a, 8, e, f, g, k and j). These two domains are linked by a central stalk (subunits gamma, delta, and epsilon) rotating inside the F1 region and a stationary peripheral stalk (subunits F6, b, d, and OSCP). Interacts with DNAJC30; interaction is direct.

It localises to the mitochondrion inner membrane. It carries out the reaction H(+)(in) = H(+)(out). Its function is as follows. Subunit a, of the mitochondrial membrane ATP synthase complex (F(1)F(0) ATP synthase or Complex V) that produces ATP from ADP in the presence of a proton gradient across the membrane which is generated by electron transport complexes of the respiratory chain. ATP synthase complex consist of a soluble F(1) head domain - the catalytic core - and a membrane F(1) domain - the membrane proton channel. These two domains are linked by a central stalk rotating inside the F(1) region and a stationary peripheral stalk. During catalysis, ATP synthesis in the catalytic domain of F(1) is coupled via a rotary mechanism of the central stalk subunits to proton translocation. With the subunit c (ATP5MC1), forms the proton-conducting channel in the F(0) domain, that contains two crucial half-channels (inlet and outlet) that facilitate proton movement from the mitochondrial intermembrane space (IMS) into the matrix. Protons are taken up via the inlet half-channel and released through the outlet half-channel, following a Grotthuss mechanism. The polypeptide is ATP synthase F(0) complex subunit a (Didelphis virginiana (North American opossum)).